Consider the following 437-residue polypeptide: Ribosomal protein uS12 methylthiotransferase RimO (437 aa).

An MTTase N-terminal domain is found at N9–K128. Residues C18, C57, C91, C152, C156, and C159 each contribute to the [4Fe-4S] cluster site. The Radical SAM core domain maps to T138–D368. In terms of domain architecture, TRAM spans Q371–A437.

This sequence belongs to the methylthiotransferase family. RimO subfamily. The cofactor is [4Fe-4S] cluster.

Its subcellular location is the cytoplasm. The catalysed reaction is L-aspartate(89)-[ribosomal protein uS12]-hydrogen + (sulfur carrier)-SH + AH2 + 2 S-adenosyl-L-methionine = 3-methylsulfanyl-L-aspartate(89)-[ribosomal protein uS12]-hydrogen + (sulfur carrier)-H + 5'-deoxyadenosine + L-methionine + A + S-adenosyl-L-homocysteine + 2 H(+). Catalyzes the methylthiolation of an aspartic acid residue of ribosomal protein uS12. In Flavobacterium johnsoniae (strain ATCC 17061 / DSM 2064 / JCM 8514 / BCRC 14874 / CCUG 350202 / NBRC 14942 / NCIMB 11054 / UW101) (Cytophaga johnsonae), this protein is Ribosomal protein uS12 methylthiotransferase RimO.